Reading from the N-terminus, the 366-residue chain is Putative F-box protein At1g26515 (366 aa).

Residues 1 to 20 (MKTRSKKTKTENNQEKSKEK) form a disordered region. The segment covering 8 to 20 (TKTENNQEKSKEK) has biased composition (basic and acidic residues). The 47-residue stretch at 20 to 66 (KNKFDQLPLDLEIEIFRRLPLKSVARFLTLSKSCAATIRSPSFITSF) folds into the F-box domain.

The protein is Putative F-box protein At1g26515 of Arabidopsis thaliana (Mouse-ear cress).